The sequence spans 724 residues: Catalase-peroxidase (724 aa).

A cross-link (tryptophyl-tyrosyl-methioninium (Trp-Tyr) (with M-252)) is located at residues 98–226 (WHSAGSYRLA…LAAVQMGLIY (129 aa)). His-99 (proton acceptor) is an active-site residue. The tryptophyl-tyrosyl-methioninium (Tyr-Met) (with W-98) cross-link spans 226 to 252 (YVNPEGVNGKPDPLKTAAQVRTTFARM). Residue His-267 coordinates heme b.

This sequence belongs to the peroxidase family. Peroxidase/catalase subfamily. Homodimer or homotetramer. It depends on heme b as a cofactor. In terms of processing, formation of the three residue Trp-Tyr-Met cross-link is important for the catalase, but not the peroxidase activity of the enzyme.

The enzyme catalyses H2O2 + AH2 = A + 2 H2O. It catalyses the reaction 2 H2O2 = O2 + 2 H2O. Its function is as follows. Bifunctional enzyme with both catalase and broad-spectrum peroxidase activity. This chain is Catalase-peroxidase, found in Maricaulis maris (strain MCS10) (Caulobacter maris).